A 563-amino-acid chain; its full sequence is Urocanate hydratase (563 aa).

Residues 53 to 54 (GG), Q131, 177 to 179 (GMG), E197, R202, 243 to 244 (NA), 264 to 268 (QTSAH), 274 to 275 (YL), and Y323 each bind NAD(+). Residue C411 is part of the active site. G493 contributes to the NAD(+) binding site.

This sequence belongs to the urocanase family. NAD(+) is required as a cofactor.

The protein resides in the cytoplasm. The catalysed reaction is 4-imidazolone-5-propanoate = trans-urocanate + H2O. It participates in amino-acid degradation; L-histidine degradation into L-glutamate; N-formimidoyl-L-glutamate from L-histidine: step 2/3. Catalyzes the conversion of urocanate to 4-imidazolone-5-propionate. In Yersinia pestis bv. Antiqua (strain Antiqua), this protein is Urocanate hydratase.